The primary structure comprises 647 residues: DEAD-box ATP-dependent RNA helicase 18 (647 aa).

The short motif at 23–51 is the Q motif element; it reads FSELSPALSPEVVKALKGGGFRRCTPVQA. The Helicase ATP-binding domain occupies 54–232; it reads IPLLLSHKDV…KAGLRNPVRV (179 aa). Position 67 to 74 (67 to 74) interacts with ATP; that stretch reads AATGSGKT. The short motif at 180 to 183 is the DEAD box element; it reads DEAD. Positions 274-430 constitute a Helicase C-terminal domain; sequence QLVDFLVQNN…DIVPQIRSAA (157 aa). Positions 507-582 form a coiled coil; sequence KYKDKAREKQ…RLLKKLKRGV (76 aa). The span at 512-545 shows a compositional bias: basic and acidic residues; the sequence is AREKQRQKTLKRKAEELALRPEIEKRRKAPEKPE. 2 disordered regions span residues 512–565 and 590–647; these read AREK…KEDM and KLTG…TRRR. Acidic residues predominate over residues 596–610; it reads ESDDDDSSDGGDSDL. Basic residues predominate over residues 619-633; that stretch reads KVLKKIKQKGKAKGS.

It belongs to the DEAD box helicase family. DDX55/SPB4 subfamily. As to quaternary structure, interacts with BRI1. In terms of processing, phosphorylated.

It catalyses the reaction ATP + H2O = ADP + phosphate + H(+). The sequence is that of DEAD-box ATP-dependent RNA helicase 18 from Oryza sativa subsp. japonica (Rice).